Consider the following 57-residue polypeptide: UPF0391 membrane protein RHECIAT_CH0003936 (57 aa).

2 helical membrane-spanning segments follow: residues 4 to 24 (WALI…SGVS) and 33 to 53 (VLFG…LMAG).

It belongs to the UPF0391 family.

It is found in the cell membrane. This is UPF0391 membrane protein RHECIAT_CH0003936 from Rhizobium etli (strain CIAT 652).